A 457-amino-acid polypeptide reads, in one-letter code: G-protein coupled receptor 135 (457 aa).

Residues 1–26 (MEEQARPPGRPAASATLQGSAHPGGA) form a disordered region. Topologically, residues 1-64 (MEEQARPPGR…EAAGSRGPAP (64 aa)) are extracellular. N-linked (GlcNAc...) asparagine glycosylation is present at Asn47. A helical transmembrane segment spans residues 65–85 (LLWHGAAVAAQALVLLLIFLL). The Cytoplasmic portion of the chain corresponds to 86 to 109 (SSLGNCAVMGVIVKHRQLRTVTNA). The chain crosses the membrane as a helical span at residues 110-130 (FILSLSLSDLLTALLCLPAAF). Residues 131 to 156 (LDLFAPPGDSGPWRSFCAASRFFSSC) lie on the Extracellular side of the membrane. The chain crosses the membrane as a helical span at residues 157 to 177 (FGIVSTFSVALISLDRYCAIV). The Cytoplasmic portion of the chain corresponds to 178-189 (RPPRDKLGRRRA). The chain crosses the membrane as a helical span at residues 190–210 (LQLLAGAWLAALGFSLPWDLL). Residues 211–235 (RAPREPPAPQSFHRCLYRTSPDPAQ) lie on the Extracellular side of the membrane. A helical transmembrane segment spans residues 236 to 256 (LGVAYSVGLVVACYLLPFLLM). Over 257-295 (CFCRYHICKTVRLSDVRVRPMTTYARVLRFFSEVRTATT) the chain is Cytoplasmic. Residues 296–316 (VLIMIIFVMCCWGPYCFLVLL) form a helical membrane-spanning segment. The Extracellular segment spans residues 317–329 (AATRQGQATQAPS). A helical transmembrane segment spans residues 330-350 (LLNVAAVWLTWANGAINPVIY). Residues 351–457 (AIRNPNISML…HNSETRDSSI (107 aa)) are Cytoplasmic-facing.

This sequence belongs to the G-protein coupled receptor 1 family. In terms of assembly, interacts with MTNR1B. Interacts with ARRB1 and ARRB2 in a spontaneous and agonist-independent manner; leading to the internalization of GPR135 in the endosomal compartment.

Its subcellular location is the cell membrane. The protein localises to the endosome membrane. In terms of biological role, orphan receptor. Has spontaneous activity for beta-arrestin recruitment. Shows a reciprocal regulatory interaction with the melatonin receptor MTNR1B most likely through receptor heteromerization. This chain is G-protein coupled receptor 135 (Gpr135), found in Mus musculus (Mouse).